The primary structure comprises 223 residues: Ras-related protein Rab-21 (223 aa).

Ala2 bears the N-acetylalanine mark. GTP contacts are provided by Gly26, Gly29, Lys30, Thr31, Ser32, Asn43, Asp44, His46, Thr48, and Thr49. Thr31 lines the Mg(2+) pocket. The short motif at 41 to 54 (KFNDKHITTLQASF) is the Switch 1 element. Residues Thr49 and Asp72 each contribute to the Mg(2+) site. The Switch 2 motif lies at 74 to 92 (AGQERFHALGPIYYRDSNG). Positions 75, 130, 131, 133, 161, and 162 each coordinate GTP. Residues Cys219 and Cys220 are each lipidated (S-geranylgeranyl cysteine). A Cysteine methyl ester modification is found at Cys220. Residues 221–223 (SSG) constitute a propeptide, removed in mature form.

Belongs to the small GTPase superfamily. Rab family. As to quaternary structure, interacts with the cytoplasmic tail of integrins ITGA1, ITGA2, ITGA5, ITGA6, ITGA11 and ITGB1; this interaction is dependent upon its GDP/GTP cycle. Interacts with RABGEF1 (via VPS9 domain). Interacts with ANKRD27. Interacts (in GTP-bound form) with VAMP8 in response to starvation; the interaction probably regulates VAMP8 endolysosomal trafficking. Interacts (active GTP-bound form) with TMED10; the interaction is indirect and regulates TMED10 abundance and localization at the Golgi. Requires Mg(2+) as cofactor.

It is found in the endoplasmic reticulum membrane. Its subcellular location is the golgi apparatus. It localises to the trans-Golgi network. The protein resides in the golgi apparatus membrane. The protein localises to the early endosome membrane. It is found in the cytoplasmic vesicle membrane. Its subcellular location is the cleavage furrow. It localises to the cell projection. The protein resides in the neuron projection. The catalysed reaction is GTP + H2O = GDP + phosphate + H(+). Regulated by guanine nucleotide exchange factors (GEFs) including ANKRD27 and RABGEF1, which promote the exchange of bound GDP for free GTP. Regulated by GTPase activating proteins (GAPs) which increase the GTP hydrolysis activity. Inhibited by GDP dissociation inhibitors (GDIs). Its function is as follows. The small GTPases Rab are key regulators of intracellular membrane trafficking, from the formation of transport vesicles to their fusion with membranes. Rabs cycle between an inactive GDP-bound form and an active GTP-bound form that is able to recruit to membranes different sets of downstream effectors directly responsible for vesicle formation, movement, tethering and fusion. RAB21 is involved in membrane trafficking control. Regulates integrin internalization and recycling, but does not influence the traffic of endosomally translocated receptors in general. As a result, may regulate cell adhesion and migration. During the mitosis of adherent cells, controls the endosomal trafficking of integrins which is required for the successful completion of cytokinesis. Involved in neurite growth. Following SBF2/MTMT13-mediated activation in response to starvation-induced autophagy, binds to and regulates SNARE protein VAMP8 endolysosomal transport required for SNARE-mediated autophagosome-lysosome fusion. Modulates protein levels of the cargo receptors TMED2 and TMED10, and required for appropriate Golgi localization of TMED10. The protein is Ras-related protein Rab-21 of Rattus norvegicus (Rat).